The following is a 247-amino-acid chain: Osmotin-like protein OSML81 (247 aa).

The N-terminal stretch at 1 to 21 (MGYLRSSFIFSLLAFVTYTYA) is a signal peptide. Disulfide bonds link cysteine 30-cysteine 225, cysteine 72-cysteine 82, cysteine 87-cysteine 93, cysteine 141-cysteine 213, cysteine 146-cysteine 196, cysteine 154-cysteine 164, cysteine 168-cysteine 177, and cysteine 178-cysteine 183.

Belongs to the thaumatin family.

This chain is Osmotin-like protein OSML81, found in Solanum commersonii (Commerson's wild potato).